The primary structure comprises 125 residues: Succinate dehydrogenase assembly factor 3, mitochondrial (125 aa).

The N-terminal 30 residues, 1-30, are a transit peptide targeting the mitochondrion; sequence MPGKHVSRVRALYRRILLLHRALPPDLKAL.

Belongs to the complex I LYR family. SDHAF3 subfamily. As to quaternary structure, interacts with Sdhb within an Sdha-Sdhb subcomplex.

The protein localises to the mitochondrion matrix. In terms of biological role, plays an essential role in the assembly of succinate dehydrogenase (SDH), an enzyme complex (also referred to as respiratory complex II) that is a component of both the tricarboxylic acid (TCA) cycle and the mitochondrial electron transport chain, and which couples the oxidation of succinate to fumarate with the reduction of ubiquinone (coenzyme Q) to ubiquinol. Promotes maturation of the iron-sulfur protein subunit Sdhb of the SDH catalytic dimer, protecting it from the deleterious effects of oxidants. May act together with SDHAF1. The chain is Succinate dehydrogenase assembly factor 3, mitochondrial from Mus musculus (Mouse).